The chain runs to 248 residues: 3-deoxy-manno-octulosonate cytidylyltransferase (248 aa).

It belongs to the KdsB family.

The protein resides in the cytoplasm. It carries out the reaction 3-deoxy-alpha-D-manno-oct-2-ulosonate + CTP = CMP-3-deoxy-beta-D-manno-octulosonate + diphosphate. It participates in nucleotide-sugar biosynthesis; CMP-3-deoxy-D-manno-octulosonate biosynthesis; CMP-3-deoxy-D-manno-octulosonate from 3-deoxy-D-manno-octulosonate and CTP: step 1/1. Its pathway is bacterial outer membrane biogenesis; lipopolysaccharide biosynthesis. In terms of biological role, activates KDO (a required 8-carbon sugar) for incorporation into bacterial lipopolysaccharide in Gram-negative bacteria. This chain is 3-deoxy-manno-octulosonate cytidylyltransferase, found in Escherichia coli O127:H6 (strain E2348/69 / EPEC).